The chain runs to 58 residues: MSKTVVRKNESLDDALRRFKRSVSKAGTLQESRKREFYEKPSVKRKKKSEAARKRKKF.

The tract at residues 37–58 (FYEKPSVKRKKKSEAARKRKKF) is disordered. The span at 43–58 (VKRKKKSEAARKRKKF) shows a compositional bias: basic residues.

This sequence belongs to the bacterial ribosomal protein bS21 family.

In Enterococcus faecalis (strain ATCC 700802 / V583), this protein is Small ribosomal subunit protein bS21.